A 448-amino-acid chain; its full sequence is Ribulose bisphosphate carboxylase large chain (448 aa).

Positions 1–2 (MS) are excised as a propeptide. At Pro3 the chain carries N-acetylproline. Lys14 is subject to N6,N6,N6-trimethyllysine. Residues Asn122 and Thr172 each contribute to the substrate site. The Proton acceptor role is filled by Lys174. Residue Lys176 coordinates substrate. Residues Lys200, Asp202, and Glu203 each contribute to the Mg(2+) site. N6-carboxylysine is present on Lys200. The Proton acceptor role is filled by His293. The substrate site is built by Arg294, His326, and Ser378.

Belongs to the RuBisCO large chain family. Type I subfamily. As to quaternary structure, heterohexadecamer of 8 large chains and 8 small chains; disulfide-linked. The disulfide link is formed within the large subunit homodimers. Requires Mg(2+) as cofactor. The disulfide bond which can form in the large chain dimeric partners within the hexadecamer appears to be associated with oxidative stress and protein turnover.

The protein resides in the plastid. Its subcellular location is the chloroplast. It catalyses the reaction 2 (2R)-3-phosphoglycerate + 2 H(+) = D-ribulose 1,5-bisphosphate + CO2 + H2O. The catalysed reaction is D-ribulose 1,5-bisphosphate + O2 = 2-phosphoglycolate + (2R)-3-phosphoglycerate + 2 H(+). RuBisCO catalyzes two reactions: the carboxylation of D-ribulose 1,5-bisphosphate, the primary event in carbon dioxide fixation, as well as the oxidative fragmentation of the pentose substrate in the photorespiration process. Both reactions occur simultaneously and in competition at the same active site. This is Ribulose bisphosphate carboxylase large chain from Dichapetalum crassifolium.